The primary structure comprises 347 residues: Phenylalanine--tRNA ligase alpha subunit (347 aa).

A Mg(2+)-binding site is contributed by Glu265.

This sequence belongs to the class-II aminoacyl-tRNA synthetase family. Phe-tRNA synthetase alpha subunit type 1 subfamily. In terms of assembly, tetramer of two alpha and two beta subunits. Mg(2+) is required as a cofactor.

It is found in the cytoplasm. The enzyme catalyses tRNA(Phe) + L-phenylalanine + ATP = L-phenylalanyl-tRNA(Phe) + AMP + diphosphate + H(+). The sequence is that of Phenylalanine--tRNA ligase alpha subunit from Wolbachia pipientis wMel.